The chain runs to 255 residues: 5'-nucleotidase SurE (255 aa).

A divalent metal cation is bound by residues aspartate 11, aspartate 12, serine 43, and asparagine 99.

Belongs to the SurE nucleotidase family. A divalent metal cation is required as a cofactor.

Its subcellular location is the cytoplasm. The catalysed reaction is a ribonucleoside 5'-phosphate + H2O = a ribonucleoside + phosphate. Functionally, nucleotidase that shows phosphatase activity on nucleoside 5'-monophosphates. The protein is 5'-nucleotidase SurE of Caldanaerobacter subterraneus subsp. tengcongensis (strain DSM 15242 / JCM 11007 / NBRC 100824 / MB4) (Thermoanaerobacter tengcongensis).